Here is a 101-residue protein sequence, read N- to C-terminus: Chaperone modulatory protein CbpM (101 aa).

Belongs to the CbpM family.

Functionally, interacts with CbpA and inhibits both the DnaJ-like co-chaperone activity and the DNA binding activity of CbpA. Together with CbpA, modulates the activity of the DnaK chaperone system. Does not inhibit the co-chaperone activity of DnaJ. The sequence is that of Chaperone modulatory protein CbpM from Salmonella arizonae (strain ATCC BAA-731 / CDC346-86 / RSK2980).